Reading from the N-terminus, the 304-residue chain is Non-specific ribonucleoside hydrolase RihC (304 aa).

Residue H233 is part of the active site.

Belongs to the IUNH family. RihC subfamily.

Functionally, hydrolyzes both purine and pyrimidine ribonucleosides with a broad-substrate specificity. The polypeptide is Non-specific ribonucleoside hydrolase RihC (Escherichia coli (strain SE11)).